We begin with the raw amino-acid sequence, 530 residues long: Type 2 DNA topoisomerase 6 subunit B (530 aa).

ATP is bound by residues N42, D76, S97–K98, G106–K113, and K427.

This sequence belongs to the TOP6B family. In terms of assembly, homodimer. Heterotetramer of two Top6A and two Top6B chains.

It carries out the reaction ATP-dependent breakage, passage and rejoining of double-stranded DNA.. Relaxes both positive and negative superturns and exhibits a strong decatenase activity. This chain is Type 2 DNA topoisomerase 6 subunit B, found in Saccharolobus islandicus (strain Y.N.15.51 / Yellowstone #2) (Sulfolobus islandicus).